A 471-amino-acid polypeptide reads, in one-letter code: ATP synthase subunit beta (471 aa).

An ATP-binding site is contributed by glycine 154 to threonine 161.

It belongs to the ATPase alpha/beta chains family. In terms of assembly, F-type ATPases have 2 components, CF(1) - the catalytic core - and CF(0) - the membrane proton channel. CF(1) has five subunits: alpha(3), beta(3), gamma(1), delta(1), epsilon(1). CF(0) has three main subunits: a(1), b(2) and c(9-12). The alpha and beta chains form an alternating ring which encloses part of the gamma chain. CF(1) is attached to CF(0) by a central stalk formed by the gamma and epsilon chains, while a peripheral stalk is formed by the delta and b chains.

It localises to the cell membrane. The catalysed reaction is ATP + H2O + 4 H(+)(in) = ADP + phosphate + 5 H(+)(out). Produces ATP from ADP in the presence of a proton gradient across the membrane. The catalytic sites are hosted primarily by the beta subunits. The polypeptide is ATP synthase subunit beta (Mesomycoplasma hyopneumoniae (strain 232) (Mycoplasma hyopneumoniae)).